We begin with the raw amino-acid sequence, 569 residues long: Proline--tRNA ligase (569 aa).

Belongs to the class-II aminoacyl-tRNA synthetase family. ProS type 1 subfamily. In terms of assembly, homodimer.

The protein resides in the cytoplasm. The enzyme catalyses tRNA(Pro) + L-proline + ATP = L-prolyl-tRNA(Pro) + AMP + diphosphate. Catalyzes the attachment of proline to tRNA(Pro) in a two-step reaction: proline is first activated by ATP to form Pro-AMP and then transferred to the acceptor end of tRNA(Pro). As ProRS can inadvertently accommodate and process non-cognate amino acids such as alanine and cysteine, to avoid such errors it has two additional distinct editing activities against alanine. One activity is designated as 'pretransfer' editing and involves the tRNA(Pro)-independent hydrolysis of activated Ala-AMP. The other activity is designated 'posttransfer' editing and involves deacylation of mischarged Ala-tRNA(Pro). The misacylated Cys-tRNA(Pro) is not edited by ProRS. This Legionella pneumophila (strain Lens) protein is Proline--tRNA ligase.